A 254-amino-acid chain; its full sequence is Alcohol dehydrogenase (254 aa).

10–33 (FVAGLGGIGLDTSKGIVKAGPKNL) is a binding site for NAD(+). Ser-138 contributes to the substrate binding site. Tyr-151 acts as the Proton acceptor in catalysis.

The protein belongs to the short-chain dehydrogenases/reductases (SDR) family. As to quaternary structure, homodimer.

It carries out the reaction a primary alcohol + NAD(+) = an aldehyde + NADH + H(+). It catalyses the reaction a secondary alcohol + NAD(+) = a ketone + NADH + H(+). This is Alcohol dehydrogenase (Adh) from Drosophila immigrans (Fruit fly).